The chain runs to 116 residues: Protein BIC2 (116 aa).

Disordered stretches follow at residues 1-33 and 95-116; these read MKNT…TCFP and DSGD…ESSC.

Its subcellular location is the nucleus. In terms of biological role, regulates the blue-light dependent dimerization of CRY2 and formation of photobodies. Inhibits CRY phosphorylation. The sequence is that of Protein BIC2 from Arabidopsis thaliana (Mouse-ear cress).